The sequence spans 342 residues: MREDYLKSDDEQFTSGEKEIERALRPLSFDDFAGQDKILENLKIFVGAAKQRGEPLDHVLLHGPPGLGKTTLSNIISNELNSNIKITSGPVLEKPGDLAGLLTNLQTNDVLFIDEIHRLNSVVEEYLYSAMEDYKIDIMLDSGANARSIQIGLNPFTLIGATTRAGLLTSPLRARFGINARLEYYDAKLLTRIVQRSSDLLNTPILETAAFEIARRSRGTPRIANNLLRRTRDFAQIKGDGTITLEIARIALQALNVDHNGLDDMDNRILTTIIDKFKGGPVGLSTIATAVSEEAETIEEVYEPFLIQEGYLKRTSRGREVTPLAYKHLQRTPPAQSGTLFE.

The segment at 1–185 (MREDYLKSDD…FGINARLEYY (185 aa)) is large ATPase domain (RuvB-L). ATP-binding positions include L24, R25, G66, K69, T70, T71, 132-134 (EDY), R175, Y185, and R222. Residue T70 coordinates Mg(2+). The segment at 186-256 (DAKLLTRIVQ…IARIALQALN (71 aa)) is small ATPAse domain (RuvB-S). Positions 259 to 342 (HNGLDDMDNR…PPAQSGTLFE (84 aa)) are head domain (RuvB-H). The DNA site is built by R314 and R319.

This sequence belongs to the RuvB family. As to quaternary structure, homohexamer. Forms an RuvA(8)-RuvB(12)-Holliday junction (HJ) complex. HJ DNA is sandwiched between 2 RuvA tetramers; dsDNA enters through RuvA and exits via RuvB. An RuvB hexamer assembles on each DNA strand where it exits the tetramer. Each RuvB hexamer is contacted by two RuvA subunits (via domain III) on 2 adjacent RuvB subunits; this complex drives branch migration. In the full resolvosome a probable DNA-RuvA(4)-RuvB(12)-RuvC(2) complex forms which resolves the HJ.

Its subcellular location is the cytoplasm. It carries out the reaction ATP + H2O = ADP + phosphate + H(+). Its function is as follows. The RuvA-RuvB-RuvC complex processes Holliday junction (HJ) DNA during genetic recombination and DNA repair, while the RuvA-RuvB complex plays an important role in the rescue of blocked DNA replication forks via replication fork reversal (RFR). RuvA specifically binds to HJ cruciform DNA, conferring on it an open structure. The RuvB hexamer acts as an ATP-dependent pump, pulling dsDNA into and through the RuvAB complex. RuvB forms 2 homohexamers on either side of HJ DNA bound by 1 or 2 RuvA tetramers; 4 subunits per hexamer contact DNA at a time. Coordinated motions by a converter formed by DNA-disengaged RuvB subunits stimulates ATP hydrolysis and nucleotide exchange. Immobilization of the converter enables RuvB to convert the ATP-contained energy into a lever motion, pulling 2 nucleotides of DNA out of the RuvA tetramer per ATP hydrolyzed, thus driving DNA branch migration. The RuvB motors rotate together with the DNA substrate, which together with the progressing nucleotide cycle form the mechanistic basis for DNA recombination by continuous HJ branch migration. Branch migration allows RuvC to scan DNA until it finds its consensus sequence, where it cleaves and resolves cruciform DNA. The protein is Holliday junction branch migration complex subunit RuvB of Cytophaga hutchinsonii (strain ATCC 33406 / DSM 1761 / CIP 103989 / NBRC 15051 / NCIMB 9469 / D465).